A 154-amino-acid chain; its full sequence is 17 kDa A-type inclusion protein (154 aa).

The stretch at 17 to 85 (QKDCSDKLDR…YKRELERDRY (69 aa)) forms a coiled coil. Residues 88–154 (SRYLTSSSDP…DVEPEHPPAF (67 aa)) are disordered.

This chain is 17 kDa A-type inclusion protein, found in Bos taurus (Bovine).